The chain runs to 86 residues: Serine protease inhibitor Kazal-type 2 (86 aa).

Residues 1–16 form the signal peptide; that stretch reads MLRLVLLLLVTDFAAS. The 55-residue stretch at 32–86 folds into the Kazal-like domain; sequence QFRTPDCGHFDFPACPRNLNPVCGTDMNTYSNECTLCMKIREDGSHINIIKDEPC. Disulfide bonds link Cys38/Cys68, Cys46/Cys65, and Cys54/Cys86.

In terms of tissue distribution, expressed in sperm (at protein level). Expressed in testis but not in ovary, brain, heart, kidney or lung. Within testis, expressed in epididymis and germ cells.

It is found in the secreted. Its subcellular location is the cytoplasmic vesicle. The protein localises to the secretory vesicle. It localises to the acrosome. Functionally, as a strong inhibitor of acrosin, it is required for normal spermiogenesis. It probably hinders premature activation of proacrosin and other proteases, thus preventing the cascade of events leading to spermiogenesis defects. May be involved in the regulation of serine protease-dependent germ cell apoptosis. It also inhibits trypsin. This chain is Serine protease inhibitor Kazal-type 2 (Spink2), found in Mus musculus (Mouse).